The sequence spans 727 residues: Glucans biosynthesis glucosyltransferase H (727 aa).

The disordered stretch occupies residues 18-41; that stretch reads SAMPNERPGAMEPQKLSKMPEGFP. Helical transmembrane passes span 58–78, 97–117, 278–298, 408–428, 460–480, 496–516, and 572–592; these read FLVVGGALLLSLFAIYEMGAV, VNFCWIALAFCSGIAGFLILL, LQQFAARIYGPVIGTGLGWWV, IMAYLSSPFWLMLILTGLMLA, LFYITMGVLFGPKVFGVLLLL, IFSVIFEVILSALIAPIMMFI, and LLAWMSPALIGLWIAVPISAW.

This sequence belongs to the glycosyltransferase 2 family. OpgH subfamily.

The protein localises to the cell inner membrane. It functions in the pathway glycan metabolism; osmoregulated periplasmic glucan (OPG) biosynthesis. Its function is as follows. Involved in the biosynthesis of osmoregulated periplasmic glucans (OPGs). In Shewanella baltica (strain OS155 / ATCC BAA-1091), this protein is Glucans biosynthesis glucosyltransferase H.